A 333-amino-acid polypeptide reads, in one-letter code: PDZ domain-containing protein GIPC1 (333 aa).

Over residues 1 to 11 (MPLGLGRRKKA) the composition is skewed to basic residues. The interval 1–55 (MPLGLGRRKKAPPLVENEEAEPSRSGLGVGEPGPLGGSGAGESQMGLPPPPASLR) is disordered. Residues 27-40 (LGVGEPGPLGGSGA) are compositionally biased toward gly residues. Serine 68 is subject to Phosphoserine. A PDZ domain is found at 133–213 (EVEVFKSEDA…GRTFTLKLTE (81 aa)). Positions 221-244 (ISQRSSGGHPGSGPQLGTGRGTLR) are disordered. Phosphoserine is present on residues serine 222, serine 225, and serine 232. Over residues 228-240 (GHPGSGPQLGTGR) the composition is skewed to gly residues. Threonine 242 is subject to Phosphothreonine. Serine 247 carries the phosphoserine modification.

It belongs to the GIPC family. As to quaternary structure, interacts with SDC4/syndecan-4 and SEMA4C/semaphorin-4C. Interacts with RGS19 (C-terminus), GLUT1 (C-terminus), ACTN1, KIF1B, MYO6 and PLEKHG5. Widely expressed.

The protein localises to the cytoplasm. The protein resides in the membrane. May be involved in G protein-linked signaling. The chain is PDZ domain-containing protein GIPC1 (Gipc1) from Rattus norvegicus (Rat).